We begin with the raw amino-acid sequence, 434 residues long: Isocitrate lyase (434 aa).

91 to 93 is a binding site for substrate; it reads SGW. D157 is a binding site for Mg(2+). Residue C195 is the Proton acceptor of the active site. Residues 196–197, R232, 317–321, and T351 each bind substrate; these read GH and NCSPS.

This sequence belongs to the isocitrate lyase/PEP mutase superfamily. Isocitrate lyase family. As to quaternary structure, homotetramer. Mg(2+) serves as cofactor.

It catalyses the reaction D-threo-isocitrate = glyoxylate + succinate. It functions in the pathway carbohydrate metabolism; glyoxylate cycle; (S)-malate from isocitrate: step 1/2. Functionally, involved in the metabolic adaptation in response to environmental changes. Catalyzes the reversible formation of succinate and glyoxylate from isocitrate, a key step of the glyoxylate cycle, which operates as an anaplerotic route for replenishing the tricarboxylic acid cycle during growth on fatty acid substrates. The sequence is that of Isocitrate lyase (aceA) from Salmonella typhimurium (strain LT2 / SGSC1412 / ATCC 700720).